A 453-amino-acid polypeptide reads, in one-letter code: Phosphoglucosamine mutase (453 aa).

The active-site Phosphoserine intermediate is S110. Mg(2+)-binding residues include S110, D247, D249, and D251. S110 is modified (phosphoserine).

Belongs to the phosphohexose mutase family. Mg(2+) is required as a cofactor. In terms of processing, activated by phosphorylation.

The enzyme catalyses alpha-D-glucosamine 1-phosphate = D-glucosamine 6-phosphate. Catalyzes the conversion of glucosamine-6-phosphate to glucosamine-1-phosphate. The sequence is that of Phosphoglucosamine mutase from Tropheryma whipplei (strain TW08/27) (Whipple's bacillus).